Consider the following 260-residue polypeptide: Indole-3-glycerol phosphate synthase (260 aa).

This sequence belongs to the TrpC family.

The catalysed reaction is 1-(2-carboxyphenylamino)-1-deoxy-D-ribulose 5-phosphate + H(+) = (1S,2R)-1-C-(indol-3-yl)glycerol 3-phosphate + CO2 + H2O. Its pathway is amino-acid biosynthesis; L-tryptophan biosynthesis; L-tryptophan from chorismate: step 4/5. The chain is Indole-3-glycerol phosphate synthase from Leifsonia xyli subsp. xyli (strain CTCB07).